The sequence spans 154 residues: MIYLASSAMSEIVMFVAVLLIAAFVAGILTTSTYKISLNINKKGDALATKLSQDFEIINDPGDIVRNSSAGTIALYIKNTGKDPIIFTNDSFTVIIDGSIVEINTTNQLTSPGSNILSPGDVGEIVVNYNETGYHRIKVISECGISRIIRGYIS.

A helical transmembrane segment spans residues 9-29; sequence MSEIVMFVAVLLIAAFVAGIL.

It belongs to the archaeal FlaG family.

It is found in the cell membrane. Its subcellular location is the archaeal flagellum. This is Putative flagella-related protein G (flaG) from Methanocaldococcus jannaschii (strain ATCC 43067 / DSM 2661 / JAL-1 / JCM 10045 / NBRC 100440) (Methanococcus jannaschii).